Consider the following 1013-residue polypeptide: PHD finger protein 20-like protein 1 (1013 aa).

One can recognise a Tudor 1 domain in the interval 11 to 71; it reads ITFEIGARLE…SNRLRPLERP (61 aa). Glycyl lysine isopeptide (Lys-Gly) (interchain with G-Cter in SUMO2) cross-links involve residues lysine 75 and lysine 79. Residues 85–141 form the Tudor 2 domain; it reads FDFKAGEEVLARWTDCRYYPAKIEAINKEGTFTVQFYDGVIRCLKRMHIKAMPEDAK. Disordered stretches follow at residues 183–206, 309–368, 389–454, and 482–511; these read AKNK…RDGG, EQAI…TPKS, VINK…QSSV, and VTGS…FANP. Residues 315 to 346 are compositionally biased toward polar residues; sequence KPQSQKKNEAVISSSANTQKPALLSSTLSSGK. Phosphoserine is present on serine 368. Positions 404–415 are enriched in basic residues; the sequence is PCKHSERRRRSQ. Serine 432 carries the post-translational modification Phosphoserine. Positions 443 to 453 are enriched in low complexity; sequence SISSQNQQQSS. The span at 496–505 shows a compositional bias: basic and acidic residues; that stretch reads ECPREEKEET. Lysine 530 is covalently cross-linked (Glycyl lysine isopeptide (Lys-Gly) (interchain with G-Cter in SUMO2)). Residues 533 to 565 show a composition bias toward basic and acidic residues; sequence KKVKLEEKTSTAFGKRKEKDKEKKEKRDKDHYK. The interval 533-585 is disordered; it reads KKVKLEEKTSTAFGKRKEKDKEKKEKRDKDHYKPKQKKKKKKKKKSKQHDYSD. A compositionally biased stretch (basic residues) spans 566 to 579; it reads PKQKKKKKKKKKSK. The PHD-type zinc finger occupies 681–729; it reads IVRCICELDEENGFMIQCEECLCWQHSVCMGLLEDSIPEQYICYICRDP. Over residues 824–852 the composition is skewed to basic and acidic residues; the sequence is RKITPQDRANSEGKECVQNHKEPALRMEE. The segment at 824–911 is disordered; the sequence is RKITPQDRAN…LLYKNRGVSE (88 aa). Residues 854–878 are compositionally biased toward polar residues; sequence YITSEHSYQKPQSFSQDCQSLTDPG. The segment covering 879–892 has biased composition (acidic residues); sequence SSDDDDASSFEEDG. The residue at position 905 (lysine 905) is an N6-acetyllysine.

As to quaternary structure, interacts with methylated DNMT1 (DNMT1K142me1). Interacts with SOX2.

It is found in the nucleus. Is a negative regulator of proteasomal degradation of a set of methylated proteins, including DNMT1 and SOX2. Involved in the maintainance of embryonic stem cells pluripotency, through the regulation of SOX2 levels. This Mus musculus (Mouse) protein is PHD finger protein 20-like protein 1 (Phf20l1).